The sequence spans 168 residues: Heat shock protein beta-9 (168 aa).

Over residues M1–Q12 the composition is skewed to polar residues. Disordered regions lie at residues M1–P25, T83–V104, and L129–P168. One can recognise a sHSP domain in the interval L38 to P151. A compositionally biased stretch (basic and acidic residues) spans R86–V104. Positions S158–P168 are enriched in polar residues.

The protein belongs to the small heat shock protein (HSP20) family. As to expression, testis specific.

The protein resides in the cytoplasm. Its subcellular location is the nucleus. In Mus musculus (Mouse), this protein is Heat shock protein beta-9 (Hspb9).